Here is a 451-residue protein sequence, read N- to C-terminus: Trigger factor (451 aa).

In terms of domain architecture, PPIase FKBP-type spans 165–250; the sequence is DDKLTIDFEG…LHQIQAREAL (86 aa).

This sequence belongs to the FKBP-type PPIase family. Tig subfamily.

It localises to the cytoplasm. It catalyses the reaction [protein]-peptidylproline (omega=180) = [protein]-peptidylproline (omega=0). Its function is as follows. Involved in protein export. Acts as a chaperone by maintaining the newly synthesized protein in an open conformation. Functions as a peptidyl-prolyl cis-trans isomerase. This Helicobacter pylori (strain G27) protein is Trigger factor.